A 186-amino-acid polypeptide reads, in one-letter code: Translation initiation factor IF-3 (186 aa).

Belongs to the IF-3 family. In terms of assembly, monomer.

The protein resides in the cytoplasm. In terms of biological role, IF-3 binds to the 30S ribosomal subunit and shifts the equilibrium between 70S ribosomes and their 50S and 30S subunits in favor of the free subunits, thus enhancing the availability of 30S subunits on which protein synthesis initiation begins. The protein is Translation initiation factor IF-3 of Borreliella burgdorferi (strain ATCC 35210 / DSM 4680 / CIP 102532 / B31) (Borrelia burgdorferi).